Consider the following 488-residue polypeptide: Bifunctional pantoate ligase/cytidylate kinase (488 aa).

1–8 (MGALHRAH) is an ATP binding site. Residues 1-251 (MGALHRAHGQ…CGETRLIDHT (251 aa)) are pantoate--beta-alanine ligase. His-8 acts as the Proton donor in catalysis. Position 36 (Gln-36) interacts with (R)-pantoate. Gln-36 is a beta-alanine binding site. Residue 125–128 (GEKD) coordinates ATP. A (R)-pantoate-binding site is contributed by Gln-131. ATP-binding positions include Val-154 and 162–165 (CSSR). The interval 252-488 (FLMSRQPIVA…PEEVWPTPGS (237 aa)) is cytidylate kinase.

In the N-terminal section; belongs to the pantothenate synthetase family. This sequence in the C-terminal section; belongs to the cytidylate kinase family. Type 1 subfamily.

It is found in the cytoplasm. The enzyme catalyses (R)-pantoate + beta-alanine + ATP = (R)-pantothenate + AMP + diphosphate + H(+). It catalyses the reaction CMP + ATP = CDP + ADP. The catalysed reaction is dCMP + ATP = dCDP + ADP. It functions in the pathway cofactor biosynthesis; (R)-pantothenate biosynthesis; (R)-pantothenate from (R)-pantoate and beta-alanine: step 1/1. Catalyzes the condensation of pantoate with beta-alanine in an ATP-dependent reaction via a pantoyl-adenylate intermediate. Functionally, catalyzes the transfer of a phosphate group from ATP to either CMP or dCMP to form CDP or dCDP and ADP, respectively. The polypeptide is Bifunctional pantoate ligase/cytidylate kinase (Prochlorococcus marinus (strain MIT 9303)).